Reading from the N-terminus, the 182-residue chain is Large ribosomal subunit protein uL13 (182 aa).

It belongs to the universal ribosomal protein uL13 family. Part of the 50S ribosomal subunit.

Functionally, this protein is one of the early assembly proteins of the 50S ribosomal subunit, although it is not seen to bind rRNA by itself. It is important during the early stages of 50S assembly. The chain is Large ribosomal subunit protein uL13 from Pyrobaculum neutrophilum (strain DSM 2338 / JCM 9278 / NBRC 100436 / V24Sta) (Thermoproteus neutrophilus).